A 284-amino-acid chain; its full sequence is Nucleotide-binding protein NGK_0463 (284 aa).

8-15 (GLSGSGKS) contributes to the ATP binding site. 58–61 (DVRS) contributes to the GTP binding site.

This sequence belongs to the RapZ-like family.

Displays ATPase and GTPase activities. This chain is Nucleotide-binding protein NGK_0463, found in Neisseria gonorrhoeae (strain NCCP11945).